The primary structure comprises 286 residues: MTHNHDPYSDAKELAGLTLGKATDYQAEYDASLLQGVPRSLNRNAINLTAESLPFHGADIWTAYELSWLNAKGKPMVAIADIQLSHESQNLIESKSFKLYLNSFNQTKFDNIDAVQKTLVQDLGECAQGQVTVKIIEPKSFGIQRVVELPGTCIDDLDIEVSDYDFNPDYLENSTDDKQIVAETLNSNLLKSNCLITSQPDWGSVMIRYQGPKIDREKLLRYLISFRQHNEFHEQCVERIFVDLKHYCHCTKLTVYARYTRRGGLDINPYRSDFEHPGESHRLARQ.

Residue 92 to 94 (IES) participates in substrate binding. Position 94–95 (94–95 (SK)) interacts with NADPH. Cys194 acts as the Thioimide intermediate in catalysis. Asp201 acts as the Proton donor in catalysis. 233–234 (HE) is a substrate binding site. 262–263 (RG) lines the NADPH pocket.

This sequence belongs to the GTP cyclohydrolase I family. QueF type 2 subfamily. Homodimer.

It is found in the cytoplasm. It catalyses the reaction 7-aminomethyl-7-carbaguanine + 2 NADP(+) = 7-cyano-7-deazaguanine + 2 NADPH + 3 H(+). The protein operates within tRNA modification; tRNA-queuosine biosynthesis. In terms of biological role, catalyzes the NADPH-dependent reduction of 7-cyano-7-deazaguanine (preQ0) to 7-aminomethyl-7-deazaguanine (preQ1). This is NADPH-dependent 7-cyano-7-deazaguanine reductase from Shewanella sp. (strain MR-7).